The sequence spans 508 residues: Photosystem II CP47 reaction center protein (508 aa).

6 consecutive transmembrane segments (helical) span residues 21-36 (SVHIMHTALVAGWAGS), 101-115 (IVFSGLCFLAAIWHW), 140-156 (GIHLFLSGVACFGFGAF), 203-218 (IAAGILGILAGLFHLS), 237-252 (VLSSSIAAVFFAAFIV), and 457-472 (TFALLFFSGHIWHGAR).

Belongs to the PsbB/PsbC family. PsbB subfamily. PSII is composed of 1 copy each of membrane proteins PsbA, PsbB, PsbC, PsbD, PsbE, PsbF, PsbH, PsbI, PsbJ, PsbK, PsbL, PsbM, PsbT, PsbX, PsbY, PsbZ, Psb30/Ycf12, at least 3 peripheral proteins of the oxygen-evolving complex and a large number of cofactors. It forms dimeric complexes. Requires Binds multiple chlorophylls. PSII binds additional chlorophylls, carotenoids and specific lipids. as cofactor.

Its subcellular location is the plastid. It is found in the chloroplast thylakoid membrane. Functionally, one of the components of the core complex of photosystem II (PSII). It binds chlorophyll and helps catalyze the primary light-induced photochemical processes of PSII. PSII is a light-driven water:plastoquinone oxidoreductase, using light energy to abstract electrons from H(2)O, generating O(2) and a proton gradient subsequently used for ATP formation. This is Photosystem II CP47 reaction center protein from Pinus thunbergii (Japanese black pine).